The following is a 357-amino-acid chain: Sorbitol dehydrogenase (357 aa).

At Ala-2 the chain carries N-acetylalanine. Cys-45 contacts Zn(2+). Substrate is bound at residue Tyr-51. Positions 70 and 71 each coordinate Zn(2+). Residue Glu-156 coordinates substrate. NAD(+)-binding residues include Ile-184, Asp-204, and Arg-209. Residues Ser-211 and Ser-225 each carry the phosphoserine modification. NAD(+) contacts are provided by residues 273-275 (VGL) and 297-299 (VFR). 2 residues coordinate substrate: Arg-299 and Tyr-300.

This sequence belongs to the zinc-containing alcohol dehydrogenase family. In terms of assembly, homotetramer. It depends on Zn(2+) as a cofactor. In terms of tissue distribution, expressed in liver. Expressed in kidney and epithelial cells of both benign and malignant prostate tissue. Expressed in epididymis (at protein level).

The protein resides in the mitochondrion membrane. Its subcellular location is the cell projection. It localises to the cilium. The protein localises to the flagellum. It carries out the reaction keto-D-fructose + NADH + H(+) = D-sorbitol + NAD(+). The enzyme catalyses L-threitol + NAD(+) = L-erythrulose + NADH + H(+). It catalyses the reaction xylitol + NAD(+) = D-xylulose + NADH + H(+). The catalysed reaction is ribitol + NAD(+) = D-ribulose + NADH + H(+). It carries out the reaction (R,R)-butane-2,3-diol + NAD(+) = (R)-acetoin + NADH + H(+). The enzyme catalyses L-iditol + NAD(+) = keto-L-sorbose + NADH + H(+). Its activity is regulated as follows. Inhibited by CP-166,572, an inhibitor that is competitive with fructose. Also competitively inhibited by phenanthroline and 4-methylpyrazole in vitro. Functionally, polyol dehydrogenase that catalyzes the reversible NAD(+)-dependent oxidation of various sugar alcohols. Is mostly active with D-sorbitol (D-glucitol), L-threitol, xylitol and ribitol as substrates, leading to the C2-oxidized products D-fructose, L-erythrulose, D-xylulose, and D-ribulose, respectively. Is a key enzyme in the polyol pathway that interconverts glucose and fructose via sorbitol, which constitutes an important alternate route for glucose metabolism. The polyol pathway is believed to be involved in the etiology of diabetic complications, such as diabetic neuropathy and retinopathy, induced by hyperglycemia. May play a role in sperm motility by using sorbitol as an alternative energy source for sperm motility. May have a more general function in the metabolism of secondary alcohols since it also catalyzes the stereospecific oxidation of (2R,3R)-2,3-butanediol. To a lesser extent, can also oxidize L-arabinitol, galactitol and D-mannitol and glycerol in vitro. Oxidizes neither ethanol nor other primary alcohols. Cannot use NADP(+) as the electron acceptor. The chain is Sorbitol dehydrogenase (SORD) from Homo sapiens (Human).